The primary structure comprises 1157 residues: Probable ATP-dependent RNA helicase DHX37 (1157 aa).

Residues 1–10 (MGKLRRRYNI) are compositionally biased toward basic residues. Disordered stretches follow at residues 1-77 (MGKL…KKEK) and 116-225 (TSKL…AAPP). Over residues 21–30 (SKGPPEPPPV) the composition is skewed to pro residues. A compositionally biased stretch (acidic residues) spans 159 to 184 (AEEEEEEEEESESELEEESELDEDPA). Pro residues-rich tracts occupy residues 198–208 (PLPPAPAPSSQ) and 216–225 (VPPPPAAAPP). Positions 262 to 429 (MEAVAEHPIV…PRLFAKPPPV (168 aa)) constitute a Helicase ATP-binding domain. 275–282 (GETGSGKT) serves as a coordination point for ATP. Residues 372 to 375 (DEAH) carry the DEAH box motif. A Helicase C-terminal domain is found at 459–716 (KVCKIHRMLP…DLILQMKALN (258 aa)). Disordered regions lie at residues 494–523 (PPSRARPQEKDDDQKDSVEEMRKFKKSRAR) and 542–584 (VLPA…QPDA). Positions 499–515 (RPQEKDDDQKDSVEEMR) are enriched in basic and acidic residues. Positions 547–571 (EGDEDREAEVDEEEGALDSDLDLDL) are enriched in acidic residues.

This sequence belongs to the DEAD box helicase family. DEAH subfamily. Part of the small subunit (SSU) processome, composed of more than 70 proteins and the RNA chaperone small nucleolar RNA (snoRNA) U3. Interacts with UTP14A. Expressed in the fallopian tube, ovary, uterus and testis. Also expressed in the brain.

It is found in the nucleus. Its subcellular location is the nucleolus. The protein resides in the cytoplasm. It localises to the nucleus membrane. The catalysed reaction is ATP + H2O = ADP + phosphate + H(+). ATP-binding RNA helicase that plays a role in maturation of the small ribosomal subunit in ribosome biogenesis. Required for the release of the U3 snoRNP from pre-ribosomal particles. Part of the small subunit (SSU) processome, first precursor of the small eukaryotic ribosomal subunit. During the assembly of the SSU processome in the nucleolus, many ribosome biogenesis factors, an RNA chaperone and ribosomal proteins associate with the nascent pre-rRNA and work in concert to generate RNA folding, modifications, rearrangements and cleavage as well as targeted degradation of pre-ribosomal RNA by the RNA exosome. Plays a role in early testis development. Probably also plays a role in brain development. The protein is Probable ATP-dependent RNA helicase DHX37 of Homo sapiens (Human).